A 231-amino-acid chain; its full sequence is Orotidine 5'-phosphate decarboxylase (231 aa).

Residues Asp9, Lys34, 62 to 71, Thr117, Arg179, Gln188, Gly208, and Arg209 contribute to the substrate site; that span reads DLKLHDIPSV. The Proton donor role is filled by Lys64.

Belongs to the OMP decarboxylase family. Type 1 subfamily. As to quaternary structure, homodimer.

The catalysed reaction is orotidine 5'-phosphate + H(+) = UMP + CO2. It functions in the pathway pyrimidine metabolism; UMP biosynthesis via de novo pathway; UMP from orotate: step 2/2. Catalyzes the decarboxylation of orotidine 5'-monophosphate (OMP) to uridine 5'-monophosphate (UMP). The protein is Orotidine 5'-phosphate decarboxylase of Aquifex aeolicus (strain VF5).